We begin with the raw amino-acid sequence, 592 residues long: Malic enzyme, hydrogenosomal (592 aa).

Residues 1-27 constitute a hydrogenosome transit peptide; it reads MLAPIQTIARPVSSILPATGALAAKRT. Catalysis depends on Tyr-134, which acts as the Proton donor. An NADP(+)-binding site is contributed by 182-205; that stretch reads VTDGSRILGLGDLGAGGMQIPIGK. Arg-187 is an NAD(+) binding site. Lys-205 functions as the Proton acceptor in the catalytic mechanism. A divalent metal cation contacts are provided by Glu-276, Asp-277, and Asp-300. Asp-300 provides a ligand contact to NAD(+). An NADP(+)-binding site is contributed by 335–352; the sequence is GAGSSGVGVCETIVDCIV. An NAD(+)-binding site is contributed by Asn-443.

This sequence belongs to the malic enzymes family. Requires Mg(2+) as cofactor. Mn(2+) is required as a cofactor.

It localises to the hydrogenosome. It carries out the reaction (S)-malate + NADP(+) = pyruvate + CO2 + NADPH. The catalysed reaction is oxaloacetate + H(+) = pyruvate + CO2. The chain is Malic enzyme, hydrogenosomal from Neocallimastix frontalis (Rumen fungus).